Consider the following 276-residue polypeptide: NADPH-dependent 7-cyano-7-deazaguanine reductase (276 aa).

Substrate is bound at residue 83–85 (IES). 85–86 (SK) lines the NADPH pocket. Residue C184 is the Thioimide intermediate of the active site. Residue D191 is the Proton donor of the active site. 223–224 (HE) contributes to the substrate binding site. 252 to 253 (RG) lines the NADPH pocket.

It belongs to the GTP cyclohydrolase I family. QueF type 2 subfamily. In terms of assembly, homodimer.

It is found in the cytoplasm. The enzyme catalyses 7-aminomethyl-7-carbaguanine + 2 NADP(+) = 7-cyano-7-deazaguanine + 2 NADPH + 3 H(+). The protein operates within tRNA modification; tRNA-queuosine biosynthesis. Catalyzes the NADPH-dependent reduction of 7-cyano-7-deazaguanine (preQ0) to 7-aminomethyl-7-deazaguanine (preQ1). The chain is NADPH-dependent 7-cyano-7-deazaguanine reductase from Ectopseudomonas mendocina (strain ymp) (Pseudomonas mendocina).